A 211-amino-acid chain; its full sequence is Small ribosomal subunit protein uS3 (211 aa).

The 69-residue stretch at 38–106 folds into the KH type-2 domain; the sequence is LRNFLKKRLY…EVYLNIQEVR (69 aa).

The protein belongs to the universal ribosomal protein uS3 family. In terms of assembly, part of the 30S ribosomal subunit. Forms a tight complex with proteins S10 and S14.

In terms of biological role, binds the lower part of the 30S subunit head. Binds mRNA in the 70S ribosome, positioning it for translation. This is Small ribosomal subunit protein uS3 from Geobacter sp. (strain M21).